The chain runs to 386 residues: Succinate--CoA ligase [ADP-forming] subunit beta (386 aa).

The 236-residue stretch at 9–244 (KEIFRKYGVP…LAEEEPREIQ (236 aa)) folds into the ATP-grasp domain. Residues K46, 53–55 (GRG), E99, L102, and E107 each bind ATP. 2 residues coordinate Mg(2+): N199 and D213. Substrate-binding positions include N264 and 321–323 (GIM).

It belongs to the succinate/malate CoA ligase beta subunit family. As to quaternary structure, heterotetramer of two alpha and two beta subunits. Mg(2+) serves as cofactor.

It catalyses the reaction succinate + ATP + CoA = succinyl-CoA + ADP + phosphate. The enzyme catalyses GTP + succinate + CoA = succinyl-CoA + GDP + phosphate. Its pathway is carbohydrate metabolism; tricarboxylic acid cycle; succinate from succinyl-CoA (ligase route): step 1/1. Succinyl-CoA synthetase functions in the citric acid cycle (TCA), coupling the hydrolysis of succinyl-CoA to the synthesis of either ATP or GTP and thus represents the only step of substrate-level phosphorylation in the TCA. The beta subunit provides nucleotide specificity of the enzyme and binds the substrate succinate, while the binding sites for coenzyme A and phosphate are found in the alpha subunit. In Myxococcus xanthus (strain DK1622), this protein is Succinate--CoA ligase [ADP-forming] subunit beta.